The sequence spans 605 residues: Putative zinc finger CCCH domain-containing protein 57 (605 aa).

3 disordered regions span residues 198–218 (RHTG…GREV), 238–261 (LLQD…DGEV), and 375–403 (QASH…YQQP). Basic and acidic residues-rich tracts occupy residues 201 to 218 (GHES…GREV) and 238 to 250 (LLQD…RADA). The span at 389–403 (FPFQQQPQHDGYQQP) shows a compositional bias: low complexity. 2 consecutive C3H1-type zinc fingers follow at residues 519–547 (EPKT…HSQD) and 557–585 (KYRT…QHRL).

This chain is Putative zinc finger CCCH domain-containing protein 57, found in Oryza sativa subsp. japonica (Rice).